The following is a 427-amino-acid chain: Adenylosuccinate synthetase (427 aa).

Residues 12-18 (GDEGKGK) and 40-42 (GHT) contribute to the GTP site. D13 serves as the catalytic Proton acceptor. 2 residues coordinate Mg(2+): D13 and G40. IMP contacts are provided by residues 13–16 (DEGK), 38–41 (NAGH), T126, R140, Q221, T236, and R299. H41 serves as the catalytic Proton donor. 295–301 (STTNRPR) serves as a coordination point for substrate. GTP-binding positions include R301, 327 to 329 (KLD), and 409 to 411 (SLG).

Belongs to the adenylosuccinate synthetase family. In terms of assembly, homodimer. The cofactor is Mg(2+).

The protein localises to the cytoplasm. The enzyme catalyses IMP + L-aspartate + GTP = N(6)-(1,2-dicarboxyethyl)-AMP + GDP + phosphate + 2 H(+). The protein operates within purine metabolism; AMP biosynthesis via de novo pathway; AMP from IMP: step 1/2. In terms of biological role, plays an important role in the de novo pathway of purine nucleotide biosynthesis. Catalyzes the first committed step in the biosynthesis of AMP from IMP. This is Adenylosuccinate synthetase from Borrelia turicatae (strain 91E135).